A 1073-amino-acid chain; its full sequence is 3-hydroxy-3-methylglutaryl-coenzyme A reductase 1 (1073 aa).

Helical transmembrane passes span phenylalanine 23–isoleucine 43, phenylalanine 181–phenylalanine 201, phenylalanine 211–valine 231, histidine 298–leucine 318, serine 326–leucine 346, isoleucine 399–glycine 419, glycine 459–leucine 479, and isoleucine 498–leucine 518. The 165-residue stretch at aspartate 182–leucine 346 folds into the SSD domain. Low complexity predominate over residues serine 542 to threonine 565. Residues serine 542–glutamate 589 are disordered. Over residues proline 579–glutamate 589 the composition is skewed to acidic residues. Glutamate 714 acts as the Charge relay system in catalysis. Serine 720–lysine 726 serves as a coordination point for CoA. Residues serine 781–phenylalanine 783 and aspartate 808–serine 816 each bind NADP(+). Lysine 848 acts as the Charge relay system in catalysis. Valine 877–lysine 879 is a CoA binding site. Aspartate 924 functions as the Charge relay system in the catalytic mechanism. A helical membrane pass occupies residues isoleucine 997 to histidine 1017. Serine 1021 to histidine 1022 contacts CoA. Histidine 1022 (proton donor) is an active-site residue. The segment at histidine 1025–asparagine 1056 is disordered. Asparagine 1026 to arginine 1027 provides a ligand contact to NADP(+). Over residues alanine 1030 to alanine 1042 the composition is skewed to low complexity. Positions serine 1046 to serine 1055 are enriched in polar residues.

Belongs to the HMG-CoA reductase family.

The protein localises to the endoplasmic reticulum membrane. It catalyses the reaction (R)-mevalonate + 2 NADP(+) + CoA = (3S)-3-hydroxy-3-methylglutaryl-CoA + 2 NADPH + 2 H(+). The protein operates within metabolic intermediate biosynthesis; (R)-mevalonate biosynthesis; (R)-mevalonate from acetyl-CoA: step 3/3. In terms of biological role, HMG-CoA reductase; part of the first module of ergosterol biosynthesis pathway that includes the early steps of the pathway, conserved across all eukaryotes, and which results in the formation of mevalonate from acetyl-coenzyme A (acetyl-CoA). HMG1 catalyzes the reduction of hydroxymethylglutaryl-CoA (HMG-CoA) to mevalonate. The first module starts with the action of the cytosolic acetyl-CoA acetyltransferase ERG10 that catalyzes the formation of acetoacetyl-CoA. The hydroxymethylglutaryl-CoA synthase ERG13 then condenses acetyl-CoA with acetoacetyl-CoA to form HMG-CoA. The 3-hydroxy-3-methylglutaryl-coenzyme A (HMG-CoA) reductase HMG1 finally reduces HMG-CoA to produce mevalonate. The chain is 3-hydroxy-3-methylglutaryl-coenzyme A reductase 1 from Candida albicans (strain SC5314 / ATCC MYA-2876) (Yeast).